Reading from the N-terminus, the 511-residue chain is GMP synthase [glutamine-hydrolyzing] (511 aa).

Positions 5 to 195 (DILVLDFGSQ…AKYACNCESV (191 aa)) constitute a Glutamine amidotransferase type-1 domain. Catalysis depends on Cys-82, which acts as the Nucleophile. Catalysis depends on residues His-169 and Glu-171. The GMPS ATP-PPase domain maps to 196-386 (WNMGSFAKTQ…LGLSKEVVYR (191 aa)). 223-229 (SGGVDSS) contributes to the ATP binding site.

As to quaternary structure, homodimer.

The enzyme catalyses XMP + L-glutamine + ATP + H2O = GMP + L-glutamate + AMP + diphosphate + 2 H(+). It participates in purine metabolism; GMP biosynthesis; GMP from XMP (L-Gln route): step 1/1. Catalyzes the synthesis of GMP from XMP. This Campylobacter jejuni subsp. jejuni serotype O:23/36 (strain 81-176) protein is GMP synthase [glutamine-hydrolyzing].